Consider the following 314-residue polypeptide: MEWSEVEVHTTNEAVEPVANVLTEFGAAGVSIEDVADFLREREDKFGEIYALKREDYPEDGVIIKAYFLKTSEFVEQIPEIEQTLKNLTTFDIPLGKFQFVVNDVDDEEWATAWKKYYHPVQITDRITIVPSWESYTPSANEIIIELDPGMAFGTGTHPTTQLCIRALSDYLQPGDEVIDVGTGSGVLSIASAKLGAKSILATDLDEIATRAAEENITLNKTEHIITVKQNNLLQDINKTNVDIVVANILAEVILLFPEDVYRALKPGGIFIASGIIEDKAKVVEEALKNAGLIIEKIEQQGDWVAIISKRGVE.

S-adenosyl-L-methionine-binding residues include threonine 161, glycine 182, aspartate 204, and asparagine 248.

This sequence belongs to the methyltransferase superfamily. PrmA family.

It is found in the cytoplasm. It catalyses the reaction L-lysyl-[protein] + 3 S-adenosyl-L-methionine = N(6),N(6),N(6)-trimethyl-L-lysyl-[protein] + 3 S-adenosyl-L-homocysteine + 3 H(+). Functionally, methylates ribosomal protein L11. In Listeria monocytogenes serotype 4a (strain HCC23), this protein is Ribosomal protein L11 methyltransferase.